A 668-amino-acid chain; its full sequence is Tastin (668 aa).

Disordered stretches follow at residues 1-102 (MTTL…GGSN), 154-177 (ERKG…PRIP), and 189-285 (FSRL…GRHH). Position 16 is a phosphoserine (serine 16). Composition is skewed to polar residues over residues 27 to 37 (QRCQDFSSVKS) and 55 to 64 (PRSTQRQRPL). Serine 97 is modified (phosphoserine). Over residues 158-168 (GTTQRGQSARS) the composition is skewed to polar residues. Phosphoserine is present on serine 169. Basic and acidic residues-rich tracts occupy residues 227 to 246 (ELRR…DRRT) and 269 to 282 (GEQE…DGGG). 3 positions are modified to phosphoserine: serine 306, serine 324, and serine 338. 2 disordered regions span residues 364–392 (ITLQ…HQEL) and 462–502 (TEPL…AEPE).

As to quaternary structure, directly binds bystin, and indirectly trophinin.

The protein localises to the cytoplasm. Functionally, could be involved with bystin and trophinin in a cell adhesion molecule complex that mediates an initial attachment of the blastocyst to uterine epithelial cells at the time of the embryo implantation. The polypeptide is Tastin (Mus musculus (Mouse)).